Here is a 250-residue protein sequence, read N- to C-terminus: Phosphonates import ATP-binding protein PhnC (250 aa).

The ABC transporter domain maps to 2 to 247; sequence ILFNNVNKVW…KLDAQAMKKI (246 aa). 35–42 lines the ATP pocket; that stretch reads GLSGAGKT.

It belongs to the ABC transporter superfamily. Phosphonates importer (TC 3.A.1.9.1) family. As to quaternary structure, the complex is composed of two ATP-binding proteins (PhnC), two transmembrane proteins (PhnE) and a solute-binding protein (PhnD).

The protein resides in the cell membrane. The catalysed reaction is phosphonate(out) + ATP + H2O = phosphonate(in) + ADP + phosphate + H(+). Functionally, part of the ABC transporter complex PhnCDE involved in phosphonates import. Responsible for energy coupling to the transport system. This Mycoplasma capricolum subsp. capricolum (strain California kid / ATCC 27343 / NCTC 10154) protein is Phosphonates import ATP-binding protein PhnC.